The chain runs to 266 residues: 4-hydroxy-tetrahydrodipicolinate reductase (266 aa).

NAD(+) contacts are provided by residues 7-12 (GTIGRM), E33, 96-98 (GTT), and 120-123 (APNM). Residue H153 is the Proton donor/acceptor of the active site. H154 serves as a coordination point for (S)-2,3,4,5-tetrahydrodipicolinate. K157 functions as the Proton donor in the catalytic mechanism. (S)-2,3,4,5-tetrahydrodipicolinate is bound at residue 163 to 164 (GT).

Belongs to the DapB family.

The protein resides in the cytoplasm. It catalyses the reaction (S)-2,3,4,5-tetrahydrodipicolinate + NAD(+) + H2O = (2S,4S)-4-hydroxy-2,3,4,5-tetrahydrodipicolinate + NADH + H(+). The enzyme catalyses (S)-2,3,4,5-tetrahydrodipicolinate + NADP(+) + H2O = (2S,4S)-4-hydroxy-2,3,4,5-tetrahydrodipicolinate + NADPH + H(+). Its pathway is amino-acid biosynthesis; L-lysine biosynthesis via DAP pathway; (S)-tetrahydrodipicolinate from L-aspartate: step 4/4. Functionally, catalyzes the conversion of 4-hydroxy-tetrahydrodipicolinate (HTPA) to tetrahydrodipicolinate. In Polynucleobacter necessarius subsp. necessarius (strain STIR1), this protein is 4-hydroxy-tetrahydrodipicolinate reductase.